We begin with the raw amino-acid sequence, 193 residues long: NADPH:quinone oxidoreductase MdaB (193 aa).

Residues 16-23, 69-72, Tyr-108, and 124-127 contribute to the FAD site; these read SNGQLNDT, GWWM, and TWNA.

It belongs to the oxidoreductase MdaB family. As to quaternary structure, homodimer. Requires FAD as cofactor.

The protein localises to the cytoplasm. It carries out the reaction a quinone + NADPH + H(+) = a quinol + NADP(+). In terms of biological role, NADPH-specific quinone reductase. This chain is NADPH:quinone oxidoreductase MdaB, found in Escherichia coli O157:H7.